The sequence spans 35 residues: 3-hydroxyisobutyrate dehydrogenase (35 aa).

4-33 (TPVGFIGLGNMGNPMAKNLMKHGYPLIIYD) is an NAD(+) binding site. Position 24 is an N6-acetyllysine; alternate (lysine 24). Lysine 24 carries the N6-succinyllysine; alternate modification.

It belongs to the HIBADH-related family. 3-hydroxyisobutyrate dehydrogenase subfamily. Homodimer.

It localises to the mitochondrion. The catalysed reaction is 3-hydroxy-2-methylpropanoate + NAD(+) = 2-methyl-3-oxopropanoate + NADH + H(+). Its pathway is amino-acid degradation; L-valine degradation. The protein is 3-hydroxyisobutyrate dehydrogenase (HIBADH) of Oryctolagus cuniculus (Rabbit).